The primary structure comprises 524 residues: Phosphoenolpyruvate carboxykinase (ATP) (524 aa).

Substrate-binding residues include Arg52, Tyr188, and Lys194. ATP contacts are provided by residues Lys194, His213, and 229-237 (GLSGTGKTT). 2 residues coordinate Mn(2+): Lys194 and His213. Asp250 serves as a coordination point for Mn(2+). The ATP site is built by Glu278, Arg314, and Thr439. Arg314 provides a ligand contact to substrate.

It belongs to the phosphoenolpyruvate carboxykinase (ATP) family. Mn(2+) serves as cofactor.

The protein resides in the cytoplasm. The catalysed reaction is oxaloacetate + ATP = phosphoenolpyruvate + ADP + CO2. It functions in the pathway carbohydrate biosynthesis; gluconeogenesis. In terms of biological role, involved in the gluconeogenesis. Catalyzes the conversion of oxaloacetate (OAA) to phosphoenolpyruvate (PEP) through direct phosphoryl transfer between the nucleoside triphosphate and OAA. The polypeptide is Phosphoenolpyruvate carboxykinase (ATP) (Campylobacter jejuni (strain RM1221)).